The primary structure comprises 337 residues: Phosphate acyltransferase (337 aa).

It belongs to the PlsX family. In terms of assembly, homodimer. Probably interacts with PlsY.

Its subcellular location is the cytoplasm. It catalyses the reaction a fatty acyl-[ACP] + phosphate = an acyl phosphate + holo-[ACP]. It functions in the pathway lipid metabolism; phospholipid metabolism. Catalyzes the reversible formation of acyl-phosphate (acyl-PO(4)) from acyl-[acyl-carrier-protein] (acyl-ACP). This enzyme utilizes acyl-ACP as fatty acyl donor, but not acyl-CoA. This Hydrogenovibrio crunogenus (strain DSM 25203 / XCL-2) (Thiomicrospira crunogena) protein is Phosphate acyltransferase.